The sequence spans 281 residues: Putative thiosulfate sulfurtransferase (281 aa).

Rhodanese domains lie at 18–125 and 154–274; these read NTDG…ELTK and AIGN…VPIE. Cys233 functions as the Cysteine persulfide intermediate in the catalytic mechanism. Substrate is bound at residue Arg238.

The catalysed reaction is thiosulfate + hydrogen cyanide = thiocyanate + sulfite + 2 H(+). In terms of biological role, may be a sulfotransferase involved in the formation of thiosulfate. In Saccharopolyspora erythraea (Streptomyces erythraeus), this protein is Putative thiosulfate sulfurtransferase (cysA).